Here is a 604-residue protein sequence, read N- to C-terminus: Envelope glycoprotein E (604 aa).

The first 24 residues, 1–24 (MRMTVVKHVMLTLICGTLSWGVQI), serve as a signal peptide directing secretion. Topologically, residues 25–526 (NTLAYASAIK…NTFPFKTYAG (502 aa)) are virion surface. N-linked (GlcNAc...) asparagine; by host glycosylation occurs at asparagine 117. The tract at residues 192–219 (CKLTPPSIQQVCIKHGACIHDVVVDVDC) is interaction with gI. Residues asparagine 249 and asparagine 303 are each glycosylated (N-linked (GlcNAc...) asparagine; by host). Intrachain disulfides connect cysteine 370/cysteine 396, cysteine 379/cysteine 388, and cysteine 415/cysteine 424. Residues asparagine 419 and asparagine 505 are each glycosylated (N-linked (GlcNAc...) asparagine; by host). A helical transmembrane segment spans residues 527-544 (ITGGFAVLALVCLALALV). Topologically, residues 545–604 (CTKRKFGHRSYWSDKAAYGQSTYYAGVPVDDFEDDTEVEVDEGAECGGSGYTVYIDKRTR) are intravirion. An Internalization motif motif is present at residues 568–571 (YAGV). Residues 574–586 (DDFEDDTEVEVDE) are acidic.

It belongs to the alphaherpesvirinae glycoprotein E family. Interacts with gI. Phosphorylated within the acidic cluster. Phosphorylation determines whether endocytosed viral gE traffics to the trans-Golgi network or recycles to the cell membrane.

It localises to the virion membrane. The protein localises to the host cell membrane. Its subcellular location is the host cell junction. The protein resides in the host Golgi apparatus membrane. It is found in the host endosome membrane. Its function is as follows. In epithelial cells, the heterodimer gE/gI is required for the cell-to-cell spread of the virus, by sorting nascent virions to cell junctions. Once the virus reaches the cell junctions, virus particles can spread to adjacent cells extremely rapidly through interactions with cellular receptors that accumulate at these junctions. Implicated in basolateral spread in polarized cells. In neuronal cells, gE/gI is essential for the anterograde spread of the infection throughout the host nervous system. Together with US9, the heterodimer gE/gI is involved in the sorting and transport of viral structural components toward axon tips. This Cercopithecine herpesvirus 9 (strain DHV) (CeHV-9) protein is Envelope glycoprotein E (gE).